Reading from the N-terminus, the 374-residue chain is 4-hydroxy-3-methylbut-2-en-1-yl diphosphate synthase (flavodoxin) (374 aa).

4 residues coordinate [4Fe-4S] cluster: C268, C271, C303, and E310.

It belongs to the IspG family. Requires [4Fe-4S] cluster as cofactor.

The enzyme catalyses (2E)-4-hydroxy-3-methylbut-2-enyl diphosphate + oxidized [flavodoxin] + H2O + 2 H(+) = 2-C-methyl-D-erythritol 2,4-cyclic diphosphate + reduced [flavodoxin]. The protein operates within isoprenoid biosynthesis; isopentenyl diphosphate biosynthesis via DXP pathway; isopentenyl diphosphate from 1-deoxy-D-xylulose 5-phosphate: step 5/6. Converts 2C-methyl-D-erythritol 2,4-cyclodiphosphate (ME-2,4cPP) into 1-hydroxy-2-methyl-2-(E)-butenyl 4-diphosphate. The protein is 4-hydroxy-3-methylbut-2-en-1-yl diphosphate synthase (flavodoxin) of Geobacillus thermodenitrificans (strain NG80-2).